The sequence spans 129 residues: Calcitonin gene-related peptide 2 (129 aa).

The N-terminal stretch at 1–25 (MGFGKPSSFLAFSILVLCQAGSLQA) is a signal peptide. The propeptide occupies 26 to 81 (QPLRSSLESLPDPAALSEKEGRLLLAALVKAYVQRKTNELEQEQEQEMEGSSLTAQ). C85 and C90 are disulfide-bonded. Phenylalanine amide is present on F120. Positions 126-129 (DLQA) are excised as a propeptide.

This sequence belongs to the calcitonin family.

Its subcellular location is the secreted. CALCB/CGRP2 is a peptide hormone that induces vasodilation mediated by the CALCRL-RAMP1 receptor complex. Dilates a variety of vessels including the coronary, cerebral and systemic vasculature. Its abundance in the CNS also points toward a neurotransmitter or neuromodulator role. In Equus caballus (Horse), this protein is Calcitonin gene-related peptide 2 (CALCB).